The sequence spans 249 residues: uncharacterized protein (249 aa).

Composition is skewed to polar residues over residues 66-79 and 92-119; these read NASL…TISP and ASGS…SSSE. Residues 66–142 form a disordered region; sequence NASLESGQSS…GPTSPRVTPG (77 aa).

It localises to the plastid. Its subcellular location is the chloroplast. This is an uncharacterized protein from Chlorella vulgaris (Green alga).